The sequence spans 97 residues: MKIRPLHDRVIVKRKEVESKSAGGIVLTGTAAGKSTRGEVLPVGNGRILDNGEIKPLDVKVGDIVIFNDGYGVKSEKIDHEEVLIMSESDILAIVEA.

It belongs to the GroES chaperonin family. As to quaternary structure, heptamer of 7 subunits arranged in a ring. Interacts with the chaperonin GroEL.

The protein localises to the cytoplasm. In terms of biological role, together with the chaperonin GroEL, plays an essential role in assisting protein folding. The GroEL-GroES system forms a nano-cage that allows encapsulation of the non-native substrate proteins and provides a physical environment optimized to promote and accelerate protein folding. GroES binds to the apical surface of the GroEL ring, thereby capping the opening of the GroEL channel. The sequence is that of Co-chaperonin GroES from Yersinia enterocolitica.